Consider the following 428-residue polypeptide: D-amino acid dehydrogenase (428 aa).

3-17 contacts FAD; it reads VVILGSGVVGVASAY.

This sequence belongs to the DadA oxidoreductase family. The cofactor is FAD.

It carries out the reaction a D-alpha-amino acid + A + H2O = a 2-oxocarboxylate + AH2 + NH4(+). The protein operates within amino-acid degradation; D-alanine degradation; NH(3) and pyruvate from D-alanine: step 1/1. In terms of biological role, oxidative deamination of D-amino acids. The chain is D-amino acid dehydrogenase from Burkholderia pseudomallei (strain K96243).